Here is a 489-residue protein sequence, read N- to C-terminus: MESQSPIESIVFTDSCHPSQQENKFVQLISDQKIAIVPKFTLECGDILYDVPVAFKTWGTLNKEGNNCLLLCHALSGSADAGDWWGPLLGPGRAFDPSHFFIVCLNSLGSPYGSASPVTWNAETHSVYGPEFPLATIRDDVNIHKLILQRLGVKQIAMAVGGSMGGMLVLEWAFDKEFVRSIVPISTSLRHSAWCISWSEAQRQSIYSDPKFNDGYYGIDDQPVSGLGAARMSALLTYRSKCSFERRFARTVPDASRHPYPDRLPTPLTPSNAHWVVHNEGNRNRRERPCRSNGSSPTSESALNSPASSVSSLPSLGASQTTDSSSLNQSSLLRRPANTYFSAQSYLRYQAKKFVSRFDANCYISITKKLDTHDITRGRGSDSPKEVMKDLSLPVLVLGIESDGLFTFDEQVEIAKSFPNATLEKIISAEGHDGFLLEFTQVNSHIQKFQKEHLIDIMSQTNSFERLDSQVNDTNRESVFGEMEDITSW.

An AB hydrolase-1 domain is found at 69 to 438 (LLLCHALSGS…AEGHDGFLLE (370 aa)). Ser163 serves as the catalytic Nucleophile. The interval 255–329 (ASRHPYPDRL…QTTDSSSLNQ (75 aa)) is disordered. Residues 280-290 (EGNRNRRERPC) are compositionally biased toward basic and acidic residues. The segment covering 299–329 (SESALNSPASSVSSLPSLGASQTTDSSSLNQ) has biased composition (low complexity). Catalysis depends on residues Asp403 and His432.

It belongs to the AB hydrolase superfamily. MetX family.

The protein resides in the cytoplasm. The catalysed reaction is L-homoserine + acetyl-CoA = O-acetyl-L-homoserine + CoA. It functions in the pathway amino-acid biosynthesis; L-methionine biosynthesis via de novo pathway; O-acetyl-L-homoserine from L-homoserine: step 1/1. In terms of biological role, commits homoserine to the methionine biosynthesis pathway by catalyzing its O-acetylation. In Schizosaccharomyces pombe (strain 972 / ATCC 24843) (Fission yeast), this protein is Homoserine O-acetyltransferase (met6).